Here is a 134-residue protein sequence, read N- to C-terminus: Small ribosomal subunit protein uS8c (134 aa).

It belongs to the universal ribosomal protein uS8 family. In terms of assembly, part of the 30S ribosomal subunit.

It is found in the plastid. It localises to the chloroplast. Functionally, one of the primary rRNA binding proteins, it binds directly to 16S rRNA central domain where it helps coordinate assembly of the platform of the 30S subunit. This Panax ginseng (Korean ginseng) protein is Small ribosomal subunit protein uS8c (rps8).